Here is a 445-residue protein sequence, read N- to C-terminus: Mannan endo-1,4-beta-mannosidase 2 (445 aa).

The first 27 residues, 1–27 (MAVGNGLILYHILGLASCIALVYFSLG), serve as a signal peptide directing secretion. A substrate-binding site is contributed by Trp110. A glycan (N-linked (GlcNAc...) asparagine) is linked at Asn181. Residue Asn226 participates in substrate binding. Glu227 acts as the Proton donor in catalysis. Tyr309 is a binding site for substrate. Residue Glu349 is the Nucleophile of the active site. Trp391 contributes to the substrate binding site.

Belongs to the glycosyl hydrolase 5 (cellulase A) family. In terms of tissue distribution, expressed in stems and seeds, and at lower levels in roots and leaves.

It is found in the secreted. It carries out the reaction Random hydrolysis of (1-&gt;4)-beta-D-mannosidic linkages in mannans, galactomannans and glucomannans.. The polypeptide is Mannan endo-1,4-beta-mannosidase 2 (MAN2) (Oryza sativa subsp. japonica (Rice)).